The sequence spans 321 residues: Transaldolase (321 aa).

Residue Lys132 is the Schiff-base intermediate with substrate of the active site.

The protein belongs to the transaldolase family. Type 1 subfamily. Homodimer.

It is found in the cytoplasm. The enzyme catalyses D-sedoheptulose 7-phosphate + D-glyceraldehyde 3-phosphate = D-erythrose 4-phosphate + beta-D-fructose 6-phosphate. It functions in the pathway carbohydrate degradation; pentose phosphate pathway; D-glyceraldehyde 3-phosphate and beta-D-fructose 6-phosphate from D-ribose 5-phosphate and D-xylulose 5-phosphate (non-oxidative stage): step 2/3. Functionally, transaldolase is important for the balance of metabolites in the pentose-phosphate pathway. This is Transaldolase from Rhizobium leguminosarum bv. trifolii (strain WSM2304).